The sequence spans 21 residues: Peptide PGLa-R2 (21 aa).

Residue Leu21 is modified to Leucine amide.

In terms of tissue distribution, expressed by the skin glands.

It localises to the secreted. In terms of biological role, antimicrobial peptide. In Xenopus ruwenzoriensis (Uganda clawed frog), this protein is Peptide PGLa-R2.